Consider the following 228-residue polypeptide: Sodium channel regulatory subunit beta-4 (228 aa).

Positions 1–30 are cleaved as a signal peptide; sequence MSRAGNRGNTQARWLGIGLLGLFLLPMYLS. Positions 31–148 constitute an Ig-like C2-type domain; it reads LEVSVGKATT…KDLNNSATIF (118 aa). At 31-161 the chain is on the extracellular side; that stretch reads LEVSVGKATT…VDKLEEVDNT (131 aa). 4 N-linked (GlcNAc...) asparagine glycosylation sites follow: N45, N71, N113, and N142. A disulfide bridge links C53 with C131. Residues 162-182 traverse the membrane as a helical segment; sequence VTLIILAVVGGVIGLLVCILL. Residues 183–228 are Cytoplasmic-facing; that stretch reads LKKLITFILKKTREKKKECLVSSSGNDNTENGLPGSKAEEKPPTKV. The interval 199-228 is disordered; sequence KECLVSSSGNDNTENGLPGSKAEEKPPTKV. Positions 203-213 are enriched in polar residues; sequence VSSSGNDNTEN. Residues 219 to 228 are compositionally biased toward basic and acidic residues; that stretch reads KAEEKPPTKV.

It belongs to the sodium channel auxiliary subunit SCN4B (TC 8.A.17) family. As to quaternary structure, a voltage-gated sodium (Nav) channel consists of an ion-conducting pore-forming alpha subunit functional on its own that is regulated by one or more beta subunits. The beta subunit SCN4B is disulfide-linked to the pore-forming alpha subunit. Interacts with SCN1A; regulatory subunit of SCN1A/Nav1.1. Interacts with SCN2A; regulatory subunit of SCN2A/Nav1.2. Contains an interchain disulfide bond with SCN2A. Expressed at a high level in dorsal root ganglia, at a lower level in brain, spinal cord, skeletal muscle and heart.

The protein localises to the cell membrane. Regulatory subunit of multiple voltage-gated sodium (Nav) channels directly mediating the depolarization of excitable membranes. Navs, also called VGSCs (voltage-gated sodium channels) or VDSCs (voltage-dependent sodium channels), operate by switching between closed and open conformations depending on the voltage difference across the membrane. In the open conformation they allow Na(+) ions to selectively pass through the pore, along their electrochemical gradient. The influx of Na+ ions provokes membrane depolarization, initiating the propagation of electrical signals throughout cells and tissues. The accessory beta subunits participate in localization and functional modulation of the Nav channels. Modulates the activity of SCN1A/Nav1.1. Modulates the activity of SCN2A/Nav1.2. This Rattus norvegicus (Rat) protein is Sodium channel regulatory subunit beta-4.